Here is a 234-residue protein sequence, read N- to C-terminus: Core atranone cluster (CAC) protein 1 (234 aa).

It functions in the pathway mycotoxin biosynthesis. Functionally, part of the core atranone cluster (CAC) which products are predicted to catalyze most or all steps of mycotoxin atranone synthesis, starting from geranylgeranyl pyrophosphate (GGPP). The initial cyclization of GGPP to dolabellane is probably performed by the terpene cyclase ATR13. The Baeyer-Villiger oxidation near the end of the atranone synthesis, which converts atranones D and E to atranones F and G is predicted to be catalyzed by the monooxygenase ATR8. Of the CAC's other predicted gene products, the reducing PKS ATR6 might synthesize a polyketide chain. This polyketide is probably transferred onto the atranone backbone by the polyketide transferase ATR5. Other predicted CAC products include 4 oxygenases (ATR2, ATR3, ATR4, and ATR14), 3 short-chain reductases (ATR7, ATR9, and ATR10), and a methyltransferase (ATR12). These may all be involved in the various steps of atranone biosynthesis, although their specific roles must await experimental determination. The chain is Core atranone cluster (CAC) protein 1 from Stachybotrys chlorohalonatus (strain IBT 40285).